Here is a 178-residue protein sequence, read N- to C-terminus: Methyltransferase flvH (178 aa).

In terms of domain architecture, Post-SET spans glutamine 120 to alanine 136. The Zn(2+) site is built by cysteine 124, cysteine 126, and cysteine 131.

This sequence belongs to the class V-like SAM-binding methyltransferase superfamily.

The enzyme catalyses L-lysine + 2 S-adenosyl-L-methionine = N(6),N(6)-dimethyl-L-lysine + 2 S-adenosyl-L-homocysteine + 2 H(+). It participates in secondary metabolite biosynthesis; terpenoid biosynthesis. In terms of biological role, methyltransferase; part of the gene cluster that mediates the biosynthesis of flavunoidine, an alkaloidal terpenoid with a tetracyclic cage-like core connected to dimethylcadaverine via a C-N bond and acylated with 5,5-dimethyl-L-pipecolate. The tetracyclic core is synthesized by the terpene cyclase flvE and the cytochrome P450 monooxygenase flvD. The terpene cyclase flvE catalyzes the cyclization of farnesyl pyrophosphate (FPP) to form (1R,4R,5S)-(+)-acoradiene and the cytochrome P450 monooxygenase flvD is then responsible for oxidative conversion of (1R,4R,5S)-(+)-acoradiene into the tetracyclic cage present in the final product flavunoidine. In parallel, the N-methyltransferase flvH dimethylates L-lysine to give N,N-dimethyl-L-Lysin which is decarboxylated by flvG to afford dimethylcadaverine. The terpene cyclase-like protein flvF is the enzyme that attaches the dimethylcadaverine precusor at the C-7 of the tetracyclic cage to yield pre-flavunoidine. The cytochrome monooxygenase flvC hydroxylates the C-10 position of pre-flavunoidine whereas the NRPS flvI acylates the terpenoid core at the hydroxylated C-10 with dimethylpipecolate to yield final flavunoidine. The bifunctional enzyme flvA and the dehydrogenase flvB are responsible for the synthesis of the dimethylpipecolate precursor. The PLP-dependent lyase domain of flvA might use L-O-acetyl-homoserine and alpha-keto-isovalerate to form an intermediary ketone that can cyclize intramolecularly to yield an imine. The imine can be reduced by flvB to yield the 6-carboxylated pipecolate. The C-terminal alpha-KG-dependent oxygenase domain of flvA is then proposed to catalyze the decarboxylation to yield dimethylpipecolate. This Aspergillus flavus (strain ATCC 200026 / FGSC A1120 / IAM 13836 / NRRL 3357 / JCM 12722 / SRRC 167) protein is Methyltransferase flvH.